Here is a 408-residue protein sequence, read N- to C-terminus: Energy-coupling factor transporter ATP-binding protein EcfA1 (408 aa).

An ABC transporter domain is found at 140–374 (IEINHLSFKY…KDFLRNIQLD (235 aa)). Residue 174 to 181 (GHNGSGKS) participates in ATP binding.

Belongs to the ABC transporter superfamily. Energy-coupling factor EcfA family. As to quaternary structure, forms a stable energy-coupling factor (ECF) transporter complex composed of 2 membrane-embedded substrate-binding proteins (S component), 2 ATP-binding proteins (A component) and 2 transmembrane proteins (T component).

It localises to the cell membrane. ATP-binding (A) component of a common energy-coupling factor (ECF) ABC-transporter complex. Unlike classic ABC transporters this ECF transporter provides the energy necessary to transport a number of different substrates. The polypeptide is Energy-coupling factor transporter ATP-binding protein EcfA1 (Mycoplasma mycoides subsp. mycoides SC (strain CCUG 32753 / NCTC 10114 / PG1)).